An 869-amino-acid polypeptide reads, in one-letter code: MQDIYRHQDIESHVQRHWEQTQTFTVKEDPKKEKYYCLAMWPYPSGRLHMGHVRNYTITDVIARYQRMLGKNVLQPMGWDAFGLPAEGAAIKNKTSPIDWTKANIQYMKKQLQSLGFAYDWSRELTSCKPEYYRWEQWFFTQLYEKGLVYKKTSDVNWCPQDFTVLANEQVIDGRCWRCDSKVERKSIPQWFIKITAYADQLLDDLDELEHWPEQVKTMQRHWIGRSEGVEIRFPLDHDEKTDLTVYSTRPDTLMGVAFIAIAPDHFFSAEIAKNVPALATFIEECRHIKMAEAETATIEKKGIDTGFFALHPLTGKKIPIWVANFVLMEYGTGAVMGVPGHDQRDWEFATQYHLPIKAVILLEDGTEPDVQKKPLIEKGRLCHSGEFNGLSYQESCDRIIDKLVDLGTGQRKVNYRLRDWGVSRQRYWGAPIPMITLEDGRIIGTPEDQLPVILPEKTLIKDMINPLKADQDWAKTSVAGQLGIRETDTFDTFIESSWYYARYACPKYDQGMIEKAAANYWLPVDQYVGGIEHAIMHLLYFRFFHKLMRDQGLVDSKEPAKRLLCQGMVLADAFYYNAQNGERVWVSPTEVTVERDNKGQFLNAFDAQGRDLIHAGMSKMSKSKNNGIDPQAIVEKYGADTVRLFMMFASAPEMTLEWQESGLEGAYRFLKRLWRFVFDHVIQGPTQPLKKENLNSTQKNLRRNLHKTIAKVTDDIGRRQTFNTAIAAIMELMNQLYRAPTNTEQDRALIQEACISVIKMLYPFTPHISFILWQHLHQSPDETHPLNIDDSLWPVVDQNALIEDETLVVIQINGKMRAKITVPMNSTQQEVYESALQEPTVIKHLKGITPCHVIYVPNKLLNLVVNNE.

Residues 42-52 (PYPSGRLHMGH) carry the 'HIGH' region motif. The 'KMSKS' region motif lies at 620-624 (KMSKS). Residue lysine 623 coordinates ATP.

This sequence belongs to the class-I aminoacyl-tRNA synthetase family.

The protein localises to the cytoplasm. The enzyme catalyses tRNA(Leu) + L-leucine + ATP = L-leucyl-tRNA(Leu) + AMP + diphosphate. In Hamiltonella defensa subsp. Acyrthosiphon pisum (strain 5AT), this protein is Leucine--tRNA ligase.